Reading from the N-terminus, the 393-residue chain is Biotin synthase, mitochondrial (393 aa).

Residues 1–20 constitute a mitochondrion transit peptide; that stretch reads MSVSFTRSFPRAFIRSYGTV. The Radical SAM core domain maps to 81 to 310; the sequence is SAIQMCTLMN…ATIVRLAAGR (230 aa). [4Fe-4S] cluster-binding residues include C96, C100, and C103. The [2Fe-2S] cluster site is built by C140, C173, C233, and R305. Residues 366-393 are disordered; sequence NAATPQQHVDSVAHESEKNPAAPAAEAL.

Belongs to the radical SAM superfamily. Biotin synthase family. The cofactor is [4Fe-4S] cluster. [2Fe-2S] cluster serves as cofactor.

The protein resides in the mitochondrion. It catalyses the reaction (4R,5S)-dethiobiotin + (sulfur carrier)-SH + 2 reduced [2Fe-2S]-[ferredoxin] + 2 S-adenosyl-L-methionine = (sulfur carrier)-H + biotin + 2 5'-deoxyadenosine + 2 L-methionine + 2 oxidized [2Fe-2S]-[ferredoxin]. Its pathway is cofactor biosynthesis; biotin biosynthesis; biotin from 7,8-diaminononanoate: step 2/2. In terms of biological role, biotin synthase; part of the cluster involved in the biosynthesis of biotin (also known as vitamin B8 or vitamin H), a water-soluble vitamin that functions as a prosthetic group of many carboxylases, such as acetyl-CoA carboxylase and pyruvate carboxylase. Catalyzes the conversion of dethiobiotin (DTB) to biotin by the insertion of a sulfur atom into dethiobiotin via a radical-based mechanism. This is Biotin synthase, mitochondrial from Emericella nidulans (strain FGSC A4 / ATCC 38163 / CBS 112.46 / NRRL 194 / M139) (Aspergillus nidulans).